The chain runs to 333 residues: UDP-N-acetylglucosamine 4,6-dehydratase (inverting) (333 aa).

Residues 19–22 (TGSF), 43–48 (SRDELK), 67–68 (DV), Ala-87, Lys-91, and 129–130 (LS) each bind NADP(+). Substrate is bound at residue Lys-91. Lys-133 is an active-site residue. The NADP(+) site is built by Tyr-141 and Lys-145. Asn-173 lines the substrate pocket. 174–178 (VVGSR) is an NADP(+) binding site. 4 residues coordinate substrate: Val-181, Thr-199, Arg-258, and Glu-261.

It belongs to the polysaccharide synthase family. Homohexamer. The cofactor is NADP(+).

It catalyses the reaction UDP-N-acetyl-alpha-D-glucosamine = UDP-2-acetamido-2,6-dideoxy-beta-L-arabino-hex-4-ulose + H2O. Functionally, catalyzes the first step in the biosynthesis of pseudaminic acid, a sialic-acid-like sugar that is used to modify flagellin. Has both C6 dehydratase and C5 epimerase activities that result in the production of both UDP-2-acetamido-2,6-dideoxy-beta-L-arabino-4-hexulose and UDP-2-acetamido-2,6-dideoxy-alpha-D-xylo-4-hexulose. This is UDP-N-acetylglucosamine 4,6-dehydratase (inverting) (pseB) from Helicobacter pylori (strain ATCC 700392 / 26695) (Campylobacter pylori).